An 860-amino-acid chain; its full sequence is Ras GTPase-activating-like protein gapA (860 aa).

Residues 1-20 show a composition bias toward acidic residues; the sequence is MEGLEIEDEDVILLDEDDDS. The interval 1–48 is disordered; it reads MEGLEIEDEDVILLDEDDDSSSSSTVNNSSSNIKNNGNTNNNIGNDDS. Over residues 21 to 46 the composition is skewed to low complexity; it reads SSSSTVNNSSSNIKNNGNTNNNIGND. The stretch at 146–185 forms a coiled coil; it reads AEIQELKRNMVAEIRRNHLLERDVNKLDKRIALLIKHRSN. In terms of domain architecture, Ras-GAP spans 269–515; it reads FLILSLFRLA…SIVRQYLEDL (247 aa). Positions 663–732 form a coiled coil; sequence NNPQLSSNAE…TIALRDLRKH (70 aa).

In terms of assembly, heterotetramer. Quaternary complex with activated rac1A, ctxA and ctxB in the absence of rgaA.

Its function is as follows. Part of signaling pathway that is required for completion of cytokinesis. gapA and rgaA control cortexillin localization to the cleavage furrow and hence may be involved in cleavage of the midbody in the final stage of cytokinesis by regulating the actin cytoskeleton. Forms a complex by linking activated rac1A to ctxA in the absence of rgaA. Assembly of this complex is necessary for the recruitment of cortexillin to the midzone of the dividing cell. The sequence is that of Ras GTPase-activating-like protein gapA (gapA) from Dictyostelium discoideum (Social amoeba).